The primary structure comprises 306 residues: Probable L,D-transpeptidase YbiS (306 aa).

Positions 1 to 24 are cleaved as a signal peptide; it reads MNMKLKTLFAAAFAVVGFCSTASA. The L,D-TPase catalytic domain occupies 99-234; sequence EGIVINSAEM…VPVGTRVQFI (136 aa). Catalysis depends on histidine 194, which acts as the Proton donor/acceptor. Residue cysteine 210 is the Nucleophile of the active site.

Belongs to the YkuD family.

The protein resides in the periplasm. The protein operates within cell wall biogenesis; peptidoglycan biosynthesis. In terms of biological role, responsible, at least in part, for anchoring of the major outer membrane lipoprotein (Lpp) to the peptidoglycan via a meso-diaminopimelyl-L-Lys- bond on the terminal residue of Lpp. In Escherichia coli O6:H1 (strain CFT073 / ATCC 700928 / UPEC), this protein is Probable L,D-transpeptidase YbiS (ybiS).